An 896-amino-acid chain; its full sequence is Bifunctional glutamine synthetase adenylyltransferase/adenylyl-removing enzyme (896 aa).

The adenylyl removase stretch occupies residues 1-411 (MSDNRLDTAR…LFNEILSEPE (411 aa)). The tract at residues 417 to 896 (NSEWQWAWQD…EVFGEEAATV (480 aa)) is adenylyl transferase.

Belongs to the GlnE family. Mg(2+) is required as a cofactor.

It catalyses the reaction [glutamine synthetase]-O(4)-(5'-adenylyl)-L-tyrosine + phosphate = [glutamine synthetase]-L-tyrosine + ADP. The catalysed reaction is [glutamine synthetase]-L-tyrosine + ATP = [glutamine synthetase]-O(4)-(5'-adenylyl)-L-tyrosine + diphosphate. Functionally, involved in the regulation of glutamine synthetase GlnA, a key enzyme in the process to assimilate ammonia. When cellular nitrogen levels are high, the C-terminal adenylyl transferase (AT) inactivates GlnA by covalent transfer of an adenylyl group from ATP to specific tyrosine residue of GlnA, thus reducing its activity. Conversely, when nitrogen levels are low, the N-terminal adenylyl removase (AR) activates GlnA by removing the adenylyl group by phosphorolysis, increasing its activity. The regulatory region of GlnE binds the signal transduction protein PII (GlnB) which indicates the nitrogen status of the cell. The protein is Bifunctional glutamine synthetase adenylyltransferase/adenylyl-removing enzyme of Neisseria meningitidis serogroup B (strain ATCC BAA-335 / MC58).